The sequence spans 345 residues: Probable RuBisCO transcriptional regulator (345 aa).

Residues 6-63 (FTLDQLRILKAIASEGSFKRAADTLYVSQPAVSLQVQNLEKQLSVPLFDRGGRKAQLT) form the HTH lysR-type domain. Positions 23-42 (FKRAADTLYVSQPAVSLQVQ) form a DNA-binding region, H-T-H motif. Residues 311 to 345 (LDPERLFANPYSSNNGDRQGDGKDGKGSIEIDSVT) form a disordered region. The segment covering 328–339 (RQGDGKDGKGSI) has biased composition (basic and acidic residues).

Belongs to the LysR transcriptional regulatory family.

Its function is as follows. Trans-acting transcriptional regulator of RuBisCO genes (rbcL and rbcS) expression. The sequence is that of Probable RuBisCO transcriptional regulator (rbcR) from Synechocystis sp. (strain ATCC 27184 / PCC 6803 / Kazusa).